The following is a 177-amino-acid chain: Cell division protein ZapC (177 aa).

It belongs to the ZapC family. Interacts directly with FtsZ.

It localises to the cytoplasm. In terms of biological role, contributes to the efficiency of the cell division process by stabilizing the polymeric form of the cell division protein FtsZ. Acts by promoting interactions between FtsZ protofilaments and suppressing the GTPase activity of FtsZ. The chain is Cell division protein ZapC from Shewanella frigidimarina (strain NCIMB 400).